A 190-amino-acid polypeptide reads, in one-letter code: Ribose 1,5-bisphosphate phosphokinase PhnN (190 aa).

Position 10-17 (10-17) interacts with ATP; that stretch reads GPSGSGKD.

The protein belongs to the ribose 1,5-bisphosphokinase family.

The enzyme catalyses alpha-D-ribose 1,5-bisphosphate + ATP = 5-phospho-alpha-D-ribose 1-diphosphate + ADP. The protein operates within metabolic intermediate biosynthesis; 5-phospho-alpha-D-ribose 1-diphosphate biosynthesis; 5-phospho-alpha-D-ribose 1-diphosphate from D-ribose 5-phosphate (route II): step 3/3. In terms of biological role, catalyzes the phosphorylation of ribose 1,5-bisphosphate to 5-phospho-D-ribosyl alpha-1-diphosphate (PRPP). This Pseudomonas fluorescens (strain SBW25) protein is Ribose 1,5-bisphosphate phosphokinase PhnN.